Reading from the N-terminus, the 505-residue chain is Poxin-Schlafen (505 aa).

Residues methionine 1–leucine 238 are poxin-like. The Proton donor role is filled by histidine 17. Tyrosine 138 (shared with catalytic histidine of dimeric partner) is an active-site residue. Residue lysine 142 is the Proton acceptor; shared with catalytic histidine of dimeric partner of the active site. The segment at methionine 239 to phenylalanine 505 is schlafen-like.

This sequence in the N-terminal section; belongs to the poxin family. The protein in the C-terminal section; belongs to the Schlafen protein family. Subgroup poxviridae B3 subfamily. In terms of assembly, homodimer.

The catalysed reaction is 2',3'-cGAMP + H2O = Gp(2'-5')Ap(3') + H(+). Its function is as follows. Nuclease that is responsible for viral evasion of host cGAS-STING innate immunity. Cleaves 2',3'-cGAMP which is produced by host cGAS following recognition of cytosolic DNA and blocks the subsequent 2',3'-cGAMP-mediated activation of TMEM173/STING, which normally spreads to adjacent cells and activates the interferon and NF-kappa-B immune responses. This chain is Poxin-Schlafen (OPG188), found in Bos taurus (Bovine).